The chain runs to 92 residues: DNA/RNA-binding protein Alba (92 aa).

At Lys-11 the chain carries N6-acetyllysine.

Belongs to the histone-like Alba family. Post-translationally, acetylated. Acetylation at Lys-11 decreases DNA-binding affinity.

It localises to the cytoplasm. It is found in the chromosome. Its function is as follows. Binds double-stranded DNA tightly but without sequence specificity. Involved in DNA compaction. In Pyrobaculum aerophilum (strain ATCC 51768 / DSM 7523 / JCM 9630 / CIP 104966 / NBRC 100827 / IM2), this protein is DNA/RNA-binding protein Alba.